Consider the following 446-residue polypeptide: Argininosuccinate synthase (446 aa).

Residues 17-25 (AFSGGLDTS) and Ala-43 contribute to the ATP site. L-citrulline is bound at residue Tyr-99. Positions 129 and 131 each coordinate ATP. L-aspartate contacts are provided by Thr-131, Asn-135, and Asp-136. Asn-135 is an L-citrulline binding site. Residue Asp-136 participates in ATP binding. L-citrulline-binding residues include Arg-139 and Ser-192. Asp-194 lines the ATP pocket. L-citrulline-binding residues include Thr-201, Glu-203, and Glu-280.

This sequence belongs to the argininosuccinate synthase family. Type 2 subfamily. In terms of assembly, homotetramer.

Its subcellular location is the cytoplasm. The enzyme catalyses L-citrulline + L-aspartate + ATP = 2-(N(omega)-L-arginino)succinate + AMP + diphosphate + H(+). It functions in the pathway amino-acid biosynthesis; L-arginine biosynthesis; L-arginine from L-ornithine and carbamoyl phosphate: step 2/3. The protein is Argininosuccinate synthase of Variovorax paradoxus (strain S110).